Consider the following 485-residue polypeptide: E3 ubiquitin-protein ligase TRIM34B (485 aa).

The RING-type zinc finger occupies 15-58 (CPVCQELLTKALSLGCGHLVCQACLISNKNAVINPRGKSSCPVC). Residues 91-127 (TKRDLCVHHGEKLLLFCKEDKKVICWVCERSQEHRGH) form a B box-type zinc finger. Positions 96, 99, 118, and 124 each coordinate Zn(2+). Residues 136-170 (VRECQENLQKALTRLRKEQEKVETLEADIKEDRLS) adopt a coiled-coil conformation. Residues 282–485 (LSGMLQKFRE…APMTLCPLNS (204 aa)) form the B30.2/SPRY domain.

This sequence belongs to the TRIM/RBCC family. In terms of assembly, homotrimer. Interacts (via B-box and SPRY domain) with TRIM5.

It localises to the cytoplasm. It is found in the mitochondrion. The catalysed reaction is S-ubiquitinyl-[E2 ubiquitin-conjugating enzyme]-L-cysteine + [acceptor protein]-L-lysine = [E2 ubiquitin-conjugating enzyme]-L-cysteine + N(6)-ubiquitinyl-[acceptor protein]-L-lysine.. It participates in protein modification; protein ubiquitination. Functions as antiviral protein and contributes to the defense against retroviral infections. Acts as a capsid-specific restriction factor with the help of TRIM5 and prevents infection from non-host-adapted retroviruses. During influenza A virus infection, promotes programmed cell death by targeting ZBP1 for 'Lys-63'-linked polyubiquitination. In turn, promotes ZBP1 recruitment of RIPK3 to mediate virus-induced programmed necrosis. Negatively regulates the function of mitochondria by enhancing mitochondrial depolarization leading to cytochrome c release and mitochondria-dependent apoptosis. Also promotes the formation of multinucleated giant cells by means of cell fusion and phagocytosis in epithelial cells. Regulates intestinal inflammation by controlling the exocytosis of the major component of colonic mucus MUC2 from colonic goblet cells. The polypeptide is E3 ubiquitin-protein ligase TRIM34B (Mus musculus (Mouse)).